The chain runs to 405 residues: Acetate kinase (405 aa).

N7 contacts Mg(2+). An ATP-binding site is contributed by K14. R99 contributes to the substrate binding site. The Proton donor/acceptor role is filled by D156. Residues H215–G219, D290–R292, and G338–H342 contribute to the ATP site. Position 391 (E391) interacts with Mg(2+).

It belongs to the acetokinase family. As to quaternary structure, homodimer. The cofactor is Mg(2+). Mn(2+) is required as a cofactor.

Its subcellular location is the cytoplasm. It carries out the reaction acetate + ATP = acetyl phosphate + ADP. It participates in metabolic intermediate biosynthesis; acetyl-CoA biosynthesis; acetyl-CoA from acetate: step 1/2. Functionally, catalyzes the formation of acetyl phosphate from acetate and ATP. Can also catalyze the reverse reaction. This Nostoc punctiforme (strain ATCC 29133 / PCC 73102) protein is Acetate kinase.